We begin with the raw amino-acid sequence, 278 residues long: Coiled-coil domain-containing protein 106 (278 aa).

A coiled-coil region spans residues Ala61–Arg99. Basic and acidic residues predominate over residues Ala102–Gly119. The interval Ala102–Val174 is disordered. Position 128 is a phosphoserine (Ser128). Positions Glu131–Gly144 are enriched in low complexity. Residues Lys150–Pro166 show a composition bias toward basic residues. The Bipartite nuclear localization signal motif lies at Arg151–Gly164.

Interacts with p53/TP53.

It is found in the nucleus. Functionally, promotes the degradation of p53/TP53 protein and inhibits its transactivity. The protein is Coiled-coil domain-containing protein 106 (CCDC106) of Bos taurus (Bovine).